The chain runs to 643 residues: MPDRLVSATLALRDDGTLVSPEFGELHRGASGTLARAHRTFVAGNGLPARWQRRRTFTIVTTAFGAGAGFLAAWVAWRDDPARCERLHVVAVEPHPFSRDDLHRAVSHMVVDTTISADVDALLDAWPILVPGLHRLEFDEGRVVLTLAFGDTIDLLKKLVARADAFFLDGAAASGDGIRALAKLAGEHATFATHAKSDDVKHALGETGFTFREVDDRLVGDYAPRWRARRHEPPRALPVAARRAIVIGAGLAGCAVVERLAARGWDVTLIERHERIASEASGNPAGVFHPLMTRDDNVASRLTRGGFLHALARWRALERAGHAFSRSTHGMLHLAESADDFARMRDAFDAFGPPSDYATLLDADAARAHLNLPVAQGGLLFPHGGAVWPAGLCVAQYAAAGERVRLLASTCVARLERRDDTWHALDDTGATLADAPVVVLANAGDAARLAGLRHVTLQPVRGQLTLLPPGTTAPLPCPAIGDGYAVPLDDGTLLIGATFEPDDTDPAMRAAGHAENLDRVRHLLPGLIGALPDPATLRGRVAFRWVVGDRLPLIGPLADETQATANARALGGAQARDLPRMPGLYGAFGFGSRGLVWAALGAELIASQLEGEPWPLERELADAVDPARFLIRALRARRVGSAG.

Residues Met1 to Ala223 are tRNA (mnm(5)s(2)U34)-methyltransferase. Residues Ile247–Gly643 are FAD-dependent cmnm(5)s(2)U34 oxidoreductase.

This sequence in the N-terminal section; belongs to the methyltransferase superfamily. tRNA (mnm(5)s(2)U34)-methyltransferase family. It in the C-terminal section; belongs to the DAO family. FAD is required as a cofactor.

It is found in the cytoplasm. The catalysed reaction is 5-aminomethyl-2-thiouridine(34) in tRNA + S-adenosyl-L-methionine = 5-methylaminomethyl-2-thiouridine(34) in tRNA + S-adenosyl-L-homocysteine + H(+). Its function is as follows. Catalyzes the last two steps in the biosynthesis of 5-methylaminomethyl-2-thiouridine (mnm(5)s(2)U) at the wobble position (U34) in tRNA. Catalyzes the FAD-dependent demodification of cmnm(5)s(2)U34 to nm(5)s(2)U34, followed by the transfer of a methyl group from S-adenosyl-L-methionine to nm(5)s(2)U34, to form mnm(5)s(2)U34. The polypeptide is tRNA 5-methylaminomethyl-2-thiouridine biosynthesis bifunctional protein MnmC (Burkholderia orbicola (strain AU 1054)).